The primary structure comprises 416 residues: S-adenosylmethionine synthase (416 aa).

His-14 contacts ATP. Residue Asp-16 coordinates Mg(2+). Glu-42 contacts K(+). L-methionine-binding residues include Glu-55 and Gln-98. The segment at 98-108 is flexible loop; the sequence is QSADINQGVDR. ATP contacts are provided by residues 164–166, 240–241, Asp-249, 255–256, Ala-272, and Lys-276; these read DAK, KF, and RK. Residue Asp-249 participates in L-methionine binding. Lys-280 serves as a coordination point for L-methionine.

Belongs to the AdoMet synthase family. Homotetramer; dimer of dimers. Requires Mg(2+) as cofactor. K(+) serves as cofactor.

Its subcellular location is the cytoplasm. The catalysed reaction is L-methionine + ATP + H2O = S-adenosyl-L-methionine + phosphate + diphosphate. It participates in amino-acid biosynthesis; S-adenosyl-L-methionine biosynthesis; S-adenosyl-L-methionine from L-methionine: step 1/1. Catalyzes the formation of S-adenosylmethionine (AdoMet) from methionine and ATP. The overall synthetic reaction is composed of two sequential steps, AdoMet formation and the subsequent tripolyphosphate hydrolysis which occurs prior to release of AdoMet from the enzyme. This is S-adenosylmethionine synthase from Flavobacterium johnsoniae (strain ATCC 17061 / DSM 2064 / JCM 8514 / BCRC 14874 / CCUG 350202 / NBRC 14942 / NCIMB 11054 / UW101) (Cytophaga johnsonae).